Consider the following 400-residue polypeptide: MSQLFSHKIAPSPIPDNISVVDLIDNYFTAYNSARLREICHLLAQKVMQPGVTVGLSLSGAMTPTGLGISALAPLVRAGLIDYIISTGANLYHDLHYALGMDLYASHPFVDDVKLRQESRIRIYDIIFDYDVLLETDAFIREVLRAEPFQRRMGTAEFHHLLGQYARAAEVELGRSHSSLLATAYECGVPIYTSSPGDSSIGMNVAALALEGSQLVLDPALDVNETAAIAYFARESDIPDQEGKSAALIIGGGSPKNFLLQTQPQIHEVLGLEERGHDYFIQITDARPDTGGLSGAVPSEAVSWGKVDPNGLRDTVVCYTDSTIALPILTAYVLNQCAPRPLKRLYDRRPAMIEELQRLYLQAQFKQQAEAKLGKEQMPEPQSTEPVATYPCGTPIKGRK.

The disordered stretch occupies residues K372–K400.

The protein belongs to the deoxyhypusine synthase family.

The chain is Deoxyhypusine synthase-like protein from Cyanothece sp. (strain PCC 7425 / ATCC 29141).